Reading from the N-terminus, the 501-residue chain is Phenylalanine--tRNA ligase alpha subunit (501 aa).

L-phenylalanine is bound by residues Thr-340 and Phe-423. Glu-425 provides a ligand contact to Mg(2+). Phe-448 lines the L-phenylalanine pocket.

The protein belongs to the class-II aminoacyl-tRNA synthetase family. Phe-tRNA synthetase alpha subunit type 2 subfamily. Tetramer of two alpha and two beta subunits. Requires Mg(2+) as cofactor.

It is found in the cytoplasm. It carries out the reaction tRNA(Phe) + L-phenylalanine + ATP = L-phenylalanyl-tRNA(Phe) + AMP + diphosphate + H(+). The protein is Phenylalanine--tRNA ligase alpha subunit of Methanococcus maripaludis (strain C5 / ATCC BAA-1333).